Reading from the N-terminus, the 159-residue chain is SsrA-binding protein (159 aa).

Over residues 138-153 the composition is skewed to basic and acidic residues; the sequence is KREDGKDKDWSREKER. Residues 138 to 159 form a disordered region; that stretch reads KREDGKDKDWSREKERLMKHKA.

This sequence belongs to the SmpB family.

The protein resides in the cytoplasm. Its function is as follows. Required for rescue of stalled ribosomes mediated by trans-translation. Binds to transfer-messenger RNA (tmRNA), required for stable association of tmRNA with ribosomes. tmRNA and SmpB together mimic tRNA shape, replacing the anticodon stem-loop with SmpB. tmRNA is encoded by the ssrA gene; the 2 termini fold to resemble tRNA(Ala) and it encodes a 'tag peptide', a short internal open reading frame. During trans-translation Ala-aminoacylated tmRNA acts like a tRNA, entering the A-site of stalled ribosomes, displacing the stalled mRNA. The ribosome then switches to translate the ORF on the tmRNA; the nascent peptide is terminated with the 'tag peptide' encoded by the tmRNA and targeted for degradation. The ribosome is freed to recommence translation, which seems to be the essential function of trans-translation. This chain is SsrA-binding protein, found in Pseudoalteromonas translucida (strain TAC 125).